Consider the following 437-residue polypeptide: Glutamate-1-semialdehyde 2,1-aminomutase (437 aa).

At Lys-279 the chain carries N6-(pyridoxal phosphate)lysine.

It belongs to the class-III pyridoxal-phosphate-dependent aminotransferase family. HemL subfamily. Homodimer. Pyridoxal 5'-phosphate is required as a cofactor.

The protein resides in the cytoplasm. It carries out the reaction (S)-4-amino-5-oxopentanoate = 5-aminolevulinate. It functions in the pathway porphyrin-containing compound metabolism; protoporphyrin-IX biosynthesis; 5-aminolevulinate from L-glutamyl-tRNA(Glu): step 2/2. The polypeptide is Glutamate-1-semialdehyde 2,1-aminomutase (Sorangium cellulosum (strain So ce56) (Polyangium cellulosum (strain So ce56))).